A 366-amino-acid polypeptide reads, in one-letter code: Putative zinc metalloprotease slr1821 (366 aa).

Residue His-20 coordinates Zn(2+). The active site involves Glu-21. A Zn(2+)-binding site is contributed by His-24. A run of 3 helical transmembrane segments spans residues 95–115 (AIVI…LLIG), 293–313 (AVIN…FLLI), and 325–345 (FQMG…VFLI). Positions 106–188 (LVFAYFLLIG…VPITVEVQRG (83 aa)) constitute a PDZ domain.

Belongs to the peptidase M50B family. The cofactor is Zn(2+).

The protein resides in the cell inner membrane. This chain is Putative zinc metalloprotease slr1821, found in Synechocystis sp. (strain ATCC 27184 / PCC 6803 / Kazusa).